We begin with the raw amino-acid sequence, 269 residues long: uncharacterized protein (269 aa).

15–41 (QKSVLITGCSSGIGLESALELKRQGFH) is an NADP(+) binding site. Residue Ser-146 participates in substrate binding. Residue Tyr-159 is the Proton acceptor of the active site.

This sequence belongs to the short-chain dehydrogenases/reductases (SDR) family.

This is an uncharacterized protein from Escherichia coli O6:H1 (strain CFT073 / ATCC 700928 / UPEC).